Reading from the N-terminus, the 250-residue chain is Eukaryotic translation initiation factor 3 subunit K (250 aa).

The PCI domain occupies 54 to 235 (YDLFGNLAIL…DVKAGVVKEN (182 aa)).

It belongs to the eIF-3 subunit K family. As to quaternary structure, component of the eukaryotic translation initiation factor 3 (eIF-3) complex.

The protein localises to the cytoplasm. Its function is as follows. Component of the eukaryotic translation initiation factor 3 (eIF-3) complex, which is involved in protein synthesis of a specialized repertoire of mRNAs and, together with other initiation factors, stimulates binding of mRNA and methionyl-tRNAi to the 40S ribosome. The eIF-3 complex specifically targets and initiates translation of a subset of mRNAs involved in cell proliferation. The protein is Eukaryotic translation initiation factor 3 subunit K of Cryptococcus neoformans var. neoformans serotype D (strain B-3501A) (Filobasidiella neoformans).